A 593-amino-acid chain; its full sequence is FAD-binding monooxygenase acrE (593 aa).

FAD-binding positions include 61–64 (TWRF), 73–74 (DS), and tyrosine 79. Residue 71 to 73 (RVD) coordinates NADP(+). Residues 200-206 (TGASGVQ) and 223-224 (RS) each bind NADP(+).

Belongs to the FAD-binding monooxygenase family. It depends on FAD as a cofactor.

It functions in the pathway secondary metabolite biosynthesis. In terms of biological role, FAD-binding monooxygenase; part of the cluster that mediates the biosynthesis of acurin A, a highly reduced polyketide coupled to a serine via a peptide bond. The activities of the highly reducing polyketide synthase acrA and the nonribosomal peptide synthetase acrB are collectively responsible for the synthesis of the acurin A core structure with a heptaketide backbone produced by acrA covalently fused to a L-serine by acrB. After the formation of the PK-NRP hybrid product, it is detached from acrB by reductive release to set up the formation of the lactam ring by aldol condensation. The hydrolyase acrC then catalyzes water loss to generate a double bond in the ring. This double bond is probably reduced, which is followed by three oxidations at C-22 to generate the carboxylic acid moiety, involving probably the FAD-binding monooxygenase acrE and the cytochrome P450 monooxygenases acrD and acrF. Finally, a last methylation step performed by the O-methyltransferase acrG leads to the production of acurin A. The chain is FAD-binding monooxygenase acrE from Aspergillus aculeatus (strain ATCC 16872 / CBS 172.66 / WB 5094).